Reading from the N-terminus, the 464-residue chain is Macrophage metalloelastase (464 aa).

Residues 1–17 (MKFLLLILTLWVTSSGA) form the signal peptide. Positions 18–100 (DPLKENDMLF…DVYHFKTMPG (83 aa)) are cleaved as a propeptide — activation peptide. An N-linked (GlcNAc...) asparagine glycan is attached at N69. A Cysteine switch motif is present at residues 85-92 (PRCGVPDV). C87 lines the Zn(2+) pocket. Ca(2+) is bound by residues D119 and D153. Residues H163 and D165 each contribute to the Zn(2+) site. Ca(2+)-binding residues include D170, G171, G173, and V175. Zn(2+) is bound at residue H178. Ca(2+)-binding residues include G185, G187, and D189. H191 provides a ligand contact to Zn(2+). Residues D193, E194, and E196 each contribute to the Ca(2+) site. H213 serves as a coordination point for Zn(2+). Residue E214 is part of the active site. H217 and H223 together coordinate Zn(2+). 4 Hemopexin repeats span residues 274 to 323 (PTAC…WPTL), 324 to 370 (PSGI…GFPD), 372 to 420 (VKKI…FPGI), and 421 to 464 (GPKI…WFDC). A disulfide bridge links C277 with C464. Ca(2+) contacts are provided by D284, E328, D376, and D425.

It belongs to the peptidase M10A family. It depends on Ca(2+) as a cofactor. Zn(2+) serves as cofactor.

Its subcellular location is the secreted. The protein localises to the extracellular space. It localises to the extracellular matrix. It carries out the reaction Hydrolysis of soluble and insoluble elastin. Specific cleavages are also produced at 14-Ala-|-Leu-15 and 16-Tyr-|-Leu-17 in the B chain of insulin.. Functionally, may be involved in tissue injury and remodeling. Has significant elastolytic activity. Can accept large and small amino acids at the P1' site, but has a preference for leucine. Aromatic or hydrophobic residues are preferred at the P1 site, with small hydrophobic residues (preferably alanine) occupying P3. The polypeptide is Macrophage metalloelastase (MMP12) (Oryctolagus cuniculus (Rabbit)).